The following is a 441-amino-acid chain: Ribulose bisphosphate carboxylase large chain (441 aa).

Lys-5 is subject to N6,N6,N6-trimethyllysine. Residues Asn-114 and Thr-164 each coordinate substrate. Catalysis depends on Lys-166, which acts as the Proton acceptor. Substrate is bound at residue Lys-168. The Mg(2+) site is built by Lys-192, Asp-194, and Glu-195. An N6-carboxylysine modification is found at Lys-192. His-285 serves as the catalytic Proton acceptor. Substrate is bound by residues Arg-286, His-318, and Ser-370.

The protein belongs to the RuBisCO large chain family. Type I subfamily. In terms of assembly, heterohexadecamer of 8 large chains and 8 small chains; disulfide-linked. The disulfide link is formed within the large subunit homodimers. The cofactor is Mg(2+). In terms of processing, the disulfide bond which can form in the large chain dimeric partners within the hexadecamer appears to be associated with oxidative stress and protein turnover.

The protein resides in the plastid. It localises to the chloroplast. The catalysed reaction is 2 (2R)-3-phosphoglycerate + 2 H(+) = D-ribulose 1,5-bisphosphate + CO2 + H2O. The enzyme catalyses D-ribulose 1,5-bisphosphate + O2 = 2-phosphoglycolate + (2R)-3-phosphoglycerate + 2 H(+). Functionally, ruBisCO catalyzes two reactions: the carboxylation of D-ribulose 1,5-bisphosphate, the primary event in carbon dioxide fixation, as well as the oxidative fragmentation of the pentose substrate in the photorespiration process. Both reactions occur simultaneously and in competition at the same active site. This is Ribulose bisphosphate carboxylase large chain from Glycyrrhiza echinata (Licorice).